The following is a 165-amino-acid chain: 3-isopropylmalate dehydratase small subunit (165 aa).

Belongs to the LeuD family. LeuD type 2 subfamily. As to quaternary structure, heterodimer of LeuC and LeuD.

It catalyses the reaction (2R,3S)-3-isopropylmalate = (2S)-2-isopropylmalate. It participates in amino-acid biosynthesis; L-leucine biosynthesis; L-leucine from 3-methyl-2-oxobutanoate: step 2/4. Its function is as follows. Catalyzes the isomerization between 2-isopropylmalate and 3-isopropylmalate, via the formation of 2-isopropylmaleate. The sequence is that of 3-isopropylmalate dehydratase small subunit from Saccharolobus islandicus (strain M.16.27) (Sulfolobus islandicus).